We begin with the raw amino-acid sequence, 446 residues long: Exodeoxyribonuclease 7 large subunit (446 aa).

This sequence belongs to the XseA family. As to quaternary structure, heterooligomer composed of large and small subunits.

The protein localises to the cytoplasm. The catalysed reaction is Exonucleolytic cleavage in either 5'- to 3'- or 3'- to 5'-direction to yield nucleoside 5'-phosphates.. Its function is as follows. Bidirectionally degrades single-stranded DNA into large acid-insoluble oligonucleotides, which are then degraded further into small acid-soluble oligonucleotides. In Streptococcus pneumoniae serotype 19F (strain G54), this protein is Exodeoxyribonuclease 7 large subunit.